Reading from the N-terminus, the 239-residue chain is MARTKKANDEVPTDSDSLKLKVAKQAAKLVKDEMVVGLGSGSTANLFIQELGKRIVEEELYIYGVPTSFDSRMVASTAGIPLISLDQCGEIDLAIDGADEVCKSTLALIKGGGGCHTMEKIVDYYAKEFIVLADEGKLVDSLGDKTPVPLEVIPFAYSTVLNKLLKLNTAPAIRSGSGKMGPVITDSGNMIIDVFMSIEDAEETEIMLNNIPGVLENGVFSKCDKVLVGTSKKVEILKK.

Substrate is bound by residues 40 to 43, 96 to 99, and 110 to 113; these read SGST, DGAD, and KGGG. Glutamate 119 functions as the Proton acceptor in the catalytic mechanism. Residue lysine 137 participates in substrate binding.

The protein belongs to the ribose 5-phosphate isomerase family. As to quaternary structure, homodimer.

It catalyses the reaction aldehydo-D-ribose 5-phosphate = D-ribulose 5-phosphate. It functions in the pathway carbohydrate degradation; pentose phosphate pathway; D-ribose 5-phosphate from D-ribulose 5-phosphate (non-oxidative stage): step 1/1. Its function is as follows. Catalyzes the reversible conversion of ribose-5-phosphate to ribulose 5-phosphate. This chain is Ribose-5-phosphate isomerase A, found in Methanococcus maripaludis (strain C7 / ATCC BAA-1331).